The following is a 100-amino-acid chain: Urease subunit gamma (100 aa).

This sequence belongs to the urease gamma subunit family. Heterotrimer of UreA (gamma), UreB (beta) and UreC (alpha) subunits. Three heterotrimers associate to form the active enzyme.

The protein resides in the cytoplasm. It carries out the reaction urea + 2 H2O + H(+) = hydrogencarbonate + 2 NH4(+). Its pathway is nitrogen metabolism; urea degradation; CO(2) and NH(3) from urea (urease route): step 1/1. This Edwardsiella ictaluri (strain 93-146) protein is Urease subunit gamma.